Consider the following 338-residue polypeptide: Ketol-acid reductoisomerase (NADP(+)) (338 aa).

Residues 1–181 (MNIYYDKDCD…GGGRAGIIET (181 aa)) enclose the KARI N-terminal Rossmann domain. Residues 24 to 27 (YGSQ), R47, S50, S52, and 82 to 85 (DEHQ) each bind NADP(+). H107 is an active-site residue. G133 is an NADP(+) binding site. Residues 182-327 (AFREETETDL…ERLRSMMPWI (146 aa)) form the KARI C-terminal knotted domain. 4 residues coordinate Mg(2+): D190, E194, E226, and E230. S251 is a binding site for substrate.

This sequence belongs to the ketol-acid reductoisomerase family. Requires Mg(2+) as cofactor.

The catalysed reaction is (2R)-2,3-dihydroxy-3-methylbutanoate + NADP(+) = (2S)-2-acetolactate + NADPH + H(+). It carries out the reaction (2R,3R)-2,3-dihydroxy-3-methylpentanoate + NADP(+) = (S)-2-ethyl-2-hydroxy-3-oxobutanoate + NADPH + H(+). It functions in the pathway amino-acid biosynthesis; L-isoleucine biosynthesis; L-isoleucine from 2-oxobutanoate: step 2/4. Its pathway is amino-acid biosynthesis; L-valine biosynthesis; L-valine from pyruvate: step 2/4. Functionally, involved in the biosynthesis of branched-chain amino acids (BCAA). Catalyzes an alkyl-migration followed by a ketol-acid reduction of (S)-2-acetolactate (S2AL) to yield (R)-2,3-dihydroxy-isovalerate. In the isomerase reaction, S2AL is rearranged via a Mg-dependent methyl migration to produce 3-hydroxy-3-methyl-2-ketobutyrate (HMKB). In the reductase reaction, this 2-ketoacid undergoes a metal-dependent reduction by NADPH to yield (R)-2,3-dihydroxy-isovalerate. The sequence is that of Ketol-acid reductoisomerase (NADP(+)) from Nitrosococcus oceani (strain ATCC 19707 / BCRC 17464 / JCM 30415 / NCIMB 11848 / C-107).